The chain runs to 637 residues: Chaperone protein DnaK (637 aa).

At threonine 196 the chain carries Phosphothreonine; by autocatalysis. Disordered stretches follow at residues 503 to 525 (AEIN…RKEE) and 598 to 637 (SGAG…DDKK). A compositionally biased stretch (low complexity) spans 598–619 (SGAGAAQAQPEAPQNSGSSQSS).

This sequence belongs to the heat shock protein 70 family.

Its function is as follows. Acts as a chaperone. This Chlorobium chlorochromatii (strain CaD3) protein is Chaperone protein DnaK.